The chain runs to 524 residues: Lysine--tRNA ligase (524 aa).

Positions 433 and 440 each coordinate Mg(2+).

The protein belongs to the class-II aminoacyl-tRNA synthetase family. Homodimer. Mg(2+) serves as cofactor.

It is found in the cytoplasm. The catalysed reaction is tRNA(Lys) + L-lysine + ATP = L-lysyl-tRNA(Lys) + AMP + diphosphate. The sequence is that of Lysine--tRNA ligase from Colwellia psychrerythraea (strain 34H / ATCC BAA-681) (Vibrio psychroerythus).